The chain runs to 260 residues: MERIETRGLVLYNRNFREDDKLVKIFTEKAGKRMFFVKHASKSKLVASIQPLTYADFIVKINDDGLSYIEDFHQVQPFKNINGDIFKLSYATYILALADAALQDKVYDPALFAFLVKTLDLMESGLDYEVLTNIFEIQLLGRFGISLNFHECAFCHRVGLPFDYSYKYSGVLCPQHYQQDERRAYLDPNVPYLLDQFQAISFDELETISIKPEMKRKLRFFIDQLYEEYVGIHLKSKKFIDDLSSWGQIMKPRTENEETE.

It belongs to the RecO family.

In terms of biological role, involved in DNA repair and RecF pathway recombination. This chain is DNA repair protein RecO, found in Streptococcus suis (strain 98HAH33).